An 85-amino-acid polypeptide reads, in one-letter code: Small ribosomal subunit protein uS17 (85 aa).

It belongs to the universal ribosomal protein uS17 family. In terms of assembly, part of the 30S ribosomal subunit.

One of the primary rRNA binding proteins, it binds specifically to the 5'-end of 16S ribosomal RNA. The polypeptide is Small ribosomal subunit protein uS17 (Ruminiclostridium cellulolyticum (strain ATCC 35319 / DSM 5812 / JCM 6584 / H10) (Clostridium cellulolyticum)).